A 68-amino-acid chain; its full sequence is ATP synthase F(0) complex subunit 8 (68 aa).

A helical membrane pass occupies residues 8 to 24 (VWPTIITSMLLTLFLLM). N6-acetyllysine; alternate is present on Lys54. N6-succinyllysine; alternate is present on Lys54. Lys57 carries the N6-acetyllysine modification.

It belongs to the ATPase protein 8 family. Component of the ATP synthase complex composed at least of ATP5F1A/subunit alpha, ATP5F1B/subunit beta, ATP5MC1/subunit c (homooctomer), MT-ATP6/subunit a, MT-ATP8/subunit 8, ATP5ME/subunit e, ATP5MF/subunit f, ATP5MG/subunit g, ATP5MK/subunit k, ATP5MJ/subunit j, ATP5F1C/subunit gamma, ATP5F1D/subunit delta, ATP5F1E/subunit epsilon, ATP5PF/subunit F6, ATP5PB/subunit b, ATP5PD/subunit d, ATP5PO/subunit OSCP. ATP synthase complex consists of a soluble F(1) head domain (subunits alpha(3) and beta(3)) - the catalytic core - and a membrane F(0) domain - the membrane proton channel (subunits c, a, 8, e, f, g, k and j). These two domains are linked by a central stalk (subunits gamma, delta, and epsilon) rotating inside the F1 region and a stationary peripheral stalk (subunits F6, b, d, and OSCP). Interacts with PRICKLE3.

The protein localises to the mitochondrion membrane. Subunit 8, of the mitochondrial membrane ATP synthase complex (F(1)F(0) ATP synthase or Complex V) that produces ATP from ADP in the presence of a proton gradient across the membrane which is generated by electron transport complexes of the respiratory chain. ATP synthase complex consist of a soluble F(1) head domain - the catalytic core - and a membrane F(1) domain - the membrane proton channel. These two domains are linked by a central stalk rotating inside the F(1) region and a stationary peripheral stalk. During catalysis, ATP synthesis in the catalytic domain of F(1) is coupled via a rotary mechanism of the central stalk subunits to proton translocation. In vivo, can only synthesize ATP although its ATP hydrolase activity can be activated artificially in vitro. Part of the complex F(0) domain. This is ATP synthase F(0) complex subunit 8 from Symphalangus syndactylus (Siamang).